The sequence spans 201 residues: ADP-ribosylation factor-related protein 1 (201 aa).

An N-acetylmethionine modification is found at Met-1. Residues 24 to 31 (GLDNAGKT), 75 to 79 (DLGGQ), and 134 to 137 (NKQD) each bind GTP.

Belongs to the small GTPase superfamily. Arf family. In terms of assembly, interacts with SYS1.

It localises to the golgi apparatus. The protein resides in the trans-Golgi network. In terms of biological role, trans-Golgi-associated GTPase that regulates protein sorting. Controls the targeting of ARL1 and its effector to the trans-Golgi. Required for the lipidation of chylomicrons in the intestine and required for VLDL lipidation in the liver. This chain is ADP-ribosylation factor-related protein 1 (ARFRP1), found in Bos taurus (Bovine).